Consider the following 80-residue polypeptide: Large ribosomal subunit protein bL28 (80 aa).

A disordered region spans residues 1-21 (MSRICQITRKKSMKGNSVAHS).

It belongs to the bacterial ribosomal protein bL28 family.

The protein is Large ribosomal subunit protein bL28 of Azobacteroides pseudotrichonymphae genomovar. CFP2.